The sequence spans 426 residues: Enolase (426 aa).

Q163 contacts (2R)-2-phosphoglycerate. E205 (proton donor) is an active-site residue. Mg(2+)-binding residues include D242, E286, and D313. (2R)-2-phosphoglycerate contacts are provided by K338, R367, S368, and K389. Catalysis depends on K338, which acts as the Proton acceptor.

It belongs to the enolase family. It depends on Mg(2+) as a cofactor.

The protein resides in the cytoplasm. It is found in the secreted. The protein localises to the cell surface. It carries out the reaction (2R)-2-phosphoglycerate = phosphoenolpyruvate + H2O. It participates in carbohydrate degradation; glycolysis; pyruvate from D-glyceraldehyde 3-phosphate: step 4/5. Its function is as follows. Catalyzes the reversible conversion of 2-phosphoglycerate (2-PG) into phosphoenolpyruvate (PEP). It is essential for the degradation of carbohydrates via glycolysis. The sequence is that of Enolase from Helicobacter pylori (strain ATCC 700392 / 26695) (Campylobacter pylori).